Here is a 239-residue protein sequence, read N- to C-terminus: tRNA (guanine-N(1)-)-methyltransferase (239 aa).

S-adenosyl-L-methionine contacts are provided by residues Gly109 and 128–133; that span reads IGDYVL.

This sequence belongs to the RNA methyltransferase TrmD family. As to quaternary structure, homodimer.

Its subcellular location is the cytoplasm. The catalysed reaction is guanosine(37) in tRNA + S-adenosyl-L-methionine = N(1)-methylguanosine(37) in tRNA + S-adenosyl-L-homocysteine + H(+). Functionally, specifically methylates guanosine-37 in various tRNAs. The chain is tRNA (guanine-N(1)-)-methyltransferase from Thermus thermophilus (strain ATCC BAA-163 / DSM 7039 / HB27).